A 511-amino-acid polypeptide reads, in one-letter code: Bifunctional purine biosynthesis protein PurH (511 aa).

Positions 1–145 (MKKRALVSVS…KNHKFVSVIV (145 aa)) constitute an MGS-like domain.

The protein belongs to the PurH family.

It catalyses the reaction (6R)-10-formyltetrahydrofolate + 5-amino-1-(5-phospho-beta-D-ribosyl)imidazole-4-carboxamide = 5-formamido-1-(5-phospho-D-ribosyl)imidazole-4-carboxamide + (6S)-5,6,7,8-tetrahydrofolate. It carries out the reaction IMP + H2O = 5-formamido-1-(5-phospho-D-ribosyl)imidazole-4-carboxamide. It functions in the pathway purine metabolism; IMP biosynthesis via de novo pathway; 5-formamido-1-(5-phospho-D-ribosyl)imidazole-4-carboxamide from 5-amino-1-(5-phospho-D-ribosyl)imidazole-4-carboxamide (10-formyl THF route): step 1/1. The protein operates within purine metabolism; IMP biosynthesis via de novo pathway; IMP from 5-formamido-1-(5-phospho-D-ribosyl)imidazole-4-carboxamide: step 1/1. In Bacillus thuringiensis subsp. konkukian (strain 97-27), this protein is Bifunctional purine biosynthesis protein PurH.